Reading from the N-terminus, the 274-residue chain is 2,3,4,5-tetrahydropyridine-2,6-dicarboxylate N-succinyltransferase (274 aa).

Positions 104 and 141 each coordinate substrate.

Belongs to the transferase hexapeptide repeat family. As to quaternary structure, homotrimer.

Its subcellular location is the cytoplasm. It carries out the reaction (S)-2,3,4,5-tetrahydrodipicolinate + succinyl-CoA + H2O = (S)-2-succinylamino-6-oxoheptanedioate + CoA. Its pathway is amino-acid biosynthesis; L-lysine biosynthesis via DAP pathway; LL-2,6-diaminopimelate from (S)-tetrahydrodipicolinate (succinylase route): step 1/3. The protein is 2,3,4,5-tetrahydropyridine-2,6-dicarboxylate N-succinyltransferase of Escherichia coli O6:H1 (strain CFT073 / ATCC 700928 / UPEC).